The primary structure comprises 414 residues: Glutamyl-tRNA reductase (414 aa).

Residues 49–52 (TCNR), serine 108, 113–115 (EPQ), and glutamine 119 contribute to the substrate site. The active-site Nucleophile is cysteine 50. 188–193 (GAGQTG) serves as a coordination point for NADP(+).

This sequence belongs to the glutamyl-tRNA reductase family. Homodimer.

It carries out the reaction (S)-4-amino-5-oxopentanoate + tRNA(Glu) + NADP(+) = L-glutamyl-tRNA(Glu) + NADPH + H(+). The protein operates within porphyrin-containing compound metabolism; protoporphyrin-IX biosynthesis; 5-aminolevulinate from L-glutamyl-tRNA(Glu): step 1/2. In terms of biological role, catalyzes the NADPH-dependent reduction of glutamyl-tRNA(Glu) to glutamate 1-semialdehyde (GSA). The protein is Glutamyl-tRNA reductase of Francisella tularensis subsp. holarctica (strain LVS).